The sequence spans 180 residues: Ribulose bisphosphate carboxylase small subunit, chloroplastic (180 aa).

A chloroplast-targeting transit peptide spans methionine 1–asparagine 56.

It belongs to the RuBisCO small chain family. In terms of assembly, heterohexadecamer of 8 large and 8 small subunits.

The protein resides in the plastid. It is found in the chloroplast. Functionally, ruBisCO catalyzes two reactions: the carboxylation of D-ribulose 1,5-bisphosphate, the primary event in carbon dioxide fixation, as well as the oxidative fragmentation of the pentose substrate. Both reactions occur simultaneously and in competition at the same active site. Although the small subunit is not catalytic it is essential for maximal activity. In Medicago sativa (Alfalfa), this protein is Ribulose bisphosphate carboxylase small subunit, chloroplastic.